Consider the following 174-residue polypeptide: NADH-ubiquinone oxidoreductase chain 6 (174 aa).

Helical transmembrane passes span 1–21 (MTYV…GFSS), 24–44 (SPIY…GIVL), 46–66 (FGGS…MLVV), 86–106 (VMIL…VVYM), and 151–171 (WLMV…IEIT).

Belongs to the complex I subunit 6 family. As to quaternary structure, core subunit of respiratory chain NADH dehydrogenase (Complex I) which is composed of 45 different subunits.

It is found in the mitochondrion inner membrane. It catalyses the reaction a ubiquinone + NADH + 5 H(+)(in) = a ubiquinol + NAD(+) + 4 H(+)(out). Its function is as follows. Core subunit of the mitochondrial membrane respiratory chain NADH dehydrogenase (Complex I) which catalyzes electron transfer from NADH through the respiratory chain, using ubiquinone as an electron acceptor. Essential for the catalytic activity and assembly of complex I. This chain is NADH-ubiquinone oxidoreductase chain 6 (MT-ND6), found in Oryctolagus cuniculus (Rabbit).